Here is a 322-residue protein sequence, read N- to C-terminus: Ferrochelatase (322 aa).

H195 and E276 together coordinate Fe cation.

This sequence belongs to the ferrochelatase family.

Its subcellular location is the cytoplasm. It catalyses the reaction heme b + 2 H(+) = protoporphyrin IX + Fe(2+). It functions in the pathway porphyrin-containing compound metabolism; protoheme biosynthesis; protoheme from protoporphyrin-IX: step 1/1. Its function is as follows. Catalyzes the ferrous insertion into protoporphyrin IX. In Edwardsiella ictaluri (strain 93-146), this protein is Ferrochelatase.